A 459-amino-acid chain; its full sequence is tRNA modification GTPase MnmE (459 aa).

Residues arginine 30, glutamate 93, and lysine 132 each coordinate (6S)-5-formyl-5,6,7,8-tetrahydrofolate. Residues 226-381 (GVTMAIVGKP…LEEKILESVK (156 aa)) form the TrmE-type G domain. Residue asparagine 236 coordinates K(+). GTP-binding positions include 236–241 (NVGKST), 255–261 (TDIPGTT), and 280–283 (DTAG). Mg(2+) is bound at residue serine 240. K(+) is bound by residues threonine 255, isoleucine 257, and threonine 260. A Mg(2+)-binding site is contributed by threonine 261. Position 459 (lysine 459) interacts with (6S)-5-formyl-5,6,7,8-tetrahydrofolate.

The protein belongs to the TRAFAC class TrmE-Era-EngA-EngB-Septin-like GTPase superfamily. TrmE GTPase family. In terms of assembly, homodimer. Heterotetramer of two MnmE and two MnmG subunits. The cofactor is K(+).

The protein resides in the cytoplasm. Functionally, exhibits a very high intrinsic GTPase hydrolysis rate. Involved in the addition of a carboxymethylaminomethyl (cmnm) group at the wobble position (U34) of certain tRNAs, forming tRNA-cmnm(5)s(2)U34. In Fervidobacterium nodosum (strain ATCC 35602 / DSM 5306 / Rt17-B1), this protein is tRNA modification GTPase MnmE.